A 313-amino-acid polypeptide reads, in one-letter code: Olfactory receptor 10Z1 (313 aa).

Topologically, residues 1–25 (MGQTNVTSWRDFVFLGFSSSGELQL) are extracellular. N5 carries an N-linked (GlcNAc...) asparagine glycan. The helical transmembrane segment at 26 to 46 (LLFALFLSLYLVTLTSNVFII) threads the bilayer. Over 47 to 54 (IAIRLDSH) the chain is Cytoplasmic. The chain crosses the membrane as a helical span at residues 55 to 75 (LHTPMYLFLSFLSFSETCYTL). At 76-99 (GIIPRMLSGLAGGDQAISYVGCAA) the chain is on the extracellular side. Cysteines 97 and 189 form a disulfide. Residues 100-120 (QMFFSASWACTNCFLLAAMGF) traverse the membrane as a helical segment. Over 121–139 (DRYVAICAPLHYASHMNPT) the chain is Cytoplasmic. Residues 140–160 (LCAQLVITSFLTGYLFGLGMT) form a helical membrane-spanning segment. The Extracellular segment spans residues 161–197 (LVIFHLSFCSSHEIQHFFCDTPPVLSLACGDTGPSEL). A helical membrane pass occupies residues 198 to 217 (RIFILSLLVLLVSFFFITIS). At 218–237 (YAYILAAILRIPSAEGQKKA) the chain is on the cytoplasmic side. A helical transmembrane segment spans residues 238–258 (FSTCASHLTVVIIHYGCASFV). The Extracellular segment spans residues 259 to 271 (YLRPKASYSLERD). Residues 272–292 (QLIAMTYTVVTPLLNPIVYSL) traverse the membrane as a helical segment. At 293-313 (RNRAIQTALRNAFRGRLLGKG) the chain is on the cytoplasmic side.

The protein belongs to the G-protein coupled receptor 1 family.

The protein resides in the cell membrane. Its function is as follows. Odorant receptor. The chain is Olfactory receptor 10Z1 (OR10Z1) from Homo sapiens (Human).